We begin with the raw amino-acid sequence, 229 residues long: Transmembrane protein 182 (229 aa).

Residues 1–26 form the signal peptide; the sequence is MRLNIAIFFGALFGALGVLLFLVAFG. The Extracellular segment spans residues 27 to 114; sequence SDYWLLATEV…SYDSAVIYRG (88 aa). N-linked (GlcNAc...) asparagine glycosylation is present at Asn47. The interaction with ITGB1 stretch occupies residues 49-59; it reads TFHHEGFFWRC. Asn102 carries N-linked (GlcNAc...) asparagine glycosylation. Residues 115-135 traverse the membrane as a helical segment; that stretch reads FWAVLMLLGVVAVVIASFLII. Topologically, residues 136–153 are cytoplasmic; the sequence is CAAPFASHFLYKAGGGSY. Residues 154-174 form a helical membrane-spanning segment; that stretch reads IAAGILFSLVVMLYVIWVQAV. The Extracellular portion of the chain corresponds to 175 to 200; that stretch reads ADMESYRNMKMKDCLDFTPSVLYGWS. The helical transmembrane segment at 201 to 221 threads the bilayer; the sequence is FFLAPAGIFFSLLAGLLFLVV. Topologically, residues 222–229 are cytoplasmic; sequence GWHIQIHH.

The protein belongs to the TMEM182 family. As to quaternary structure, interacts with ITGB1.

It localises to the cell membrane. Negatively regulates myogenesis and skeletal muscle regeneration via its association with ITGB1. Modulates ITGB1 activation by decreasing ITGB1-LAMB1 interaction and inhibiting ITGB1-mediated intracellular signaling during myogenesis. This Homo sapiens (Human) protein is Transmembrane protein 182 (TMEM182).